We begin with the raw amino-acid sequence, 127 residues long: Mu-like prophage FluMu protein gp41 (127 aa).

Positions 107 to 127 (VSRGRLDTADQETGKDLSAVS) are disordered. Residues 110–121 (GRLDTADQETGK) show a composition bias toward basic and acidic residues.

To phage Mu protein gp41.

The chain is Mu-like prophage FluMu protein gp41 from Haemophilus influenzae (strain ATCC 51907 / DSM 11121 / KW20 / Rd).